Consider the following 516-residue polypeptide: Cytochrome P450 1A1 (516 aa).

Residues 33–44 are mitochondrial targeting signal; that stretch reads WQPRVPKGLKSP. Ser71 carries O-linked (GlcNAc) serine glycosylation. Phe228 serves as a coordination point for substrate. Cys461 is a binding site for heme.

Belongs to the cytochrome P450 family. As to quaternary structure, interacts with cytosolic chaperones HSP70 and HSP90; this interaction is required for initial targeting to mitochondria. Interacts (via mitochondrial targeting signal) with TOMM40 (via N-terminus); this interaction is required for translocation across the mitochondrial outer membrane. It depends on heme as a cofactor.

The protein localises to the endoplasmic reticulum membrane. It is found in the mitochondrion inner membrane. Its subcellular location is the microsome membrane. The protein resides in the cytoplasm. The catalysed reaction is an organic molecule + reduced [NADPH--hemoprotein reductase] + O2 = an alcohol + oxidized [NADPH--hemoprotein reductase] + H2O + H(+). It catalyses the reaction estrone + reduced [NADPH--hemoprotein reductase] + O2 = 2-hydroxyestrone + oxidized [NADPH--hemoprotein reductase] + H2O + H(+). The enzyme catalyses estrone + reduced [NADPH--hemoprotein reductase] + O2 = 4-hydroxyestrone + oxidized [NADPH--hemoprotein reductase] + H2O + H(+). It carries out the reaction estrone + reduced [NADPH--hemoprotein reductase] + O2 = 6alpha-hydroxyestrone + oxidized [NADPH--hemoprotein reductase] + H2O + H(+). The catalysed reaction is estrone + reduced [NADPH--hemoprotein reductase] + O2 = 15alpha-hydroxyestrone + oxidized [NADPH--hemoprotein reductase] + H2O + H(+). It catalyses the reaction estrone + reduced [NADPH--hemoprotein reductase] + O2 = 16alpha-hydroxyestrone + oxidized [NADPH--hemoprotein reductase] + H2O + H(+). The enzyme catalyses 17beta-estradiol + reduced [NADPH--hemoprotein reductase] + O2 = 2-hydroxy-17beta-estradiol + oxidized [NADPH--hemoprotein reductase] + H2O + H(+). It carries out the reaction 17beta-estradiol + reduced [NADPH--hemoprotein reductase] + O2 = 4-hydroxy-17beta-estradiol + oxidized [NADPH--hemoprotein reductase] + H2O + H(+). The catalysed reaction is 17beta-estradiol + reduced [NADPH--hemoprotein reductase] + O2 = 6alpha-hydroxy-17beta-estradiol + oxidized [NADPH--hemoprotein reductase] + H2O + H(+). It catalyses the reaction 17beta-estradiol + reduced [NADPH--hemoprotein reductase] + O2 = 7alpha-hydroxy-17beta-estradiol + oxidized [NADPH--hemoprotein reductase] + H2O + H(+). The enzyme catalyses 17beta-estradiol + reduced [NADPH--hemoprotein reductase] + O2 = 15alpha-hydroxy-17beta-estradiol + oxidized [NADPH--hemoprotein reductase] + H2O + H(+). It carries out the reaction (5Z,8Z,11Z)-eicosatrienoate + reduced [NADPH--hemoprotein reductase] + O2 = 19-hydroxy-(5Z,8Z,11Z)-eicosatrienoate + oxidized [NADPH--hemoprotein reductase] + H2O + H(+). The catalysed reaction is (5Z,8Z,11Z,14Z)-eicosatetraenoate + reduced [NADPH--hemoprotein reductase] + O2 = 16-hydroxy-(5Z,8Z,11Z,14Z)-eicosatetraenoate + oxidized [NADPH--hemoprotein reductase] + H2O + H(+). It catalyses the reaction (5Z,8Z,11Z,14Z)-eicosatetraenoate + reduced [NADPH--hemoprotein reductase] + O2 = 17-hydroxy-(5Z,8Z,11Z,14Z)-eicosatetraenoate + oxidized [NADPH--hemoprotein reductase] + H2O + H(+). The enzyme catalyses (5Z,8Z,11Z,14Z)-eicosatetraenoate + reduced [NADPH--hemoprotein reductase] + O2 = 18-hydroxy-(5Z,8Z,11Z,14Z)-eicosatetraenoate + oxidized [NADPH--hemoprotein reductase] + H2O + H(+). It carries out the reaction (5Z,8Z,11Z,14Z)-eicosatetraenoate + reduced [NADPH--hemoprotein reductase] + O2 = 19-hydroxy-(5Z,8Z,11Z,14Z)-eicosatetraenoate + oxidized [NADPH--hemoprotein reductase] + H2O + H(+). The catalysed reaction is (5Z,8Z,11Z,14Z,17Z)-eicosapentaenoate + reduced [NADPH--hemoprotein reductase] + O2 = 19-hydroxy-(5Z,8Z,11Z,14Z,17Z)-eicosapentaenoate + oxidized [NADPH--hemoprotein reductase] + H2O + H(+). It catalyses the reaction (5Z,8Z,11Z,14Z)-eicosatetraenoate + reduced [NADPH--hemoprotein reductase] + O2 = (8R,9S)-epoxy-(5Z,11Z,14Z)-eicosatrienoate + oxidized [NADPH--hemoprotein reductase] + H2O + H(+). The enzyme catalyses (5Z,8Z,11Z,14Z)-eicosatetraenoate + reduced [NADPH--hemoprotein reductase] + O2 = (11R,12S)-epoxy-(5Z,8Z,14Z)-eicosatrienoate + oxidized [NADPH--hemoprotein reductase] + H2O + H(+). It carries out the reaction (5Z,8Z,11Z,14Z)-eicosatetraenoate + reduced [NADPH--hemoprotein reductase] + O2 = (14S,15R)-epoxy-(5Z,8Z,11Z)-eicosatrienoate + oxidized [NADPH--hemoprotein reductase] + H2O + H(+). The catalysed reaction is (5Z,8Z,11Z,14Z)-eicosatetraenoate + reduced [NADPH--hemoprotein reductase] + O2 = (14R,15S)-epoxy-(5Z,8Z,11Z)-eicosatrienoate + oxidized [NADPH--hemoprotein reductase] + H2O + H(+). It catalyses the reaction (5Z,8Z,11Z,14Z,17Z)-eicosapentaenoate + reduced [NADPH--hemoprotein reductase] + O2 = (17R,18S)-epoxy-(5Z,8Z,11Z,14Z)-eicosatetraenoate + oxidized [NADPH--hemoprotein reductase] + H2O + H(+). The enzyme catalyses (4Z,7Z,10Z,13Z,16Z,19Z)-docosahexaenoate + reduced [NADPH--hemoprotein reductase] + O2 = (19S,20R)-epoxy-(4Z,7Z,10Z,13Z,16Z)-docosapentaenoate + oxidized [NADPH--hemoprotein reductase] + H2O + H(+). It carries out the reaction (4Z,7Z,10Z,13Z,16Z,19Z)-docosahexaenoate + reduced [NADPH--hemoprotein reductase] + O2 = (19R,20S)-epoxy-(4Z,7Z,10Z,13Z,16Z)-docosapentaenoate + oxidized [NADPH--hemoprotein reductase] + H2O + H(+). The catalysed reaction is all-trans-retinol + reduced [NADPH--hemoprotein reductase] + O2 = all-trans-retinal + oxidized [NADPH--hemoprotein reductase] + 2 H2O + H(+). It catalyses the reaction all-trans-retinal + reduced [NADPH--hemoprotein reductase] + O2 = all-trans-retinoate + oxidized [NADPH--hemoprotein reductase] + H2O + 2 H(+). The enzyme catalyses (13S)-hydroperoxy-(9Z,11E)-octadecadienoate = 13-oxo-(9Z,11E)-octadecadienoate + H2O. It carries out the reaction (12S)-hydroperoxy-(5Z,8Z,10E,14Z)-eicosatetraenoate = 12-oxo-(5Z,8Z,10E,14Z)-eicosatetraenoate + H2O. The catalysed reaction is (15S)-hydroperoxy-(5Z,8Z,11Z,13E)-eicosatetraenoate = 15-oxo-(5Z,8Z,11Z,13E)-eicosatetraenoate + H2O. It catalyses the reaction (5S)-hydroperoxy-(6E,8Z,11Z,14Z)-eicosatetraenoate = 5-oxo-(6E,8Z,11Z,14Z)-eicosatetraenoate + H2O. The protein operates within steroid hormone biosynthesis. Its pathway is lipid metabolism; fatty acid metabolism. It participates in cofactor metabolism; retinol metabolism. In terms of biological role, a cytochrome P450 monooxygenase involved in the metabolism of various endogenous substrates, including fatty acids, steroid hormones and vitamins. Mechanistically, uses molecular oxygen inserting one oxygen atom into a substrate, and reducing the second into a water molecule, with two electrons provided by NADPH via cytochrome P450 reductase (CPR; NADPH-ferrihemoprotein reductase). Catalyzes the hydroxylation of carbon-hydrogen bonds. Exhibits high catalytic activity for the formation of hydroxyestrogens from estrone (E1) and 17beta-estradiol (E2), namely 2-hydroxy E1 and E2, as well as D-ring hydroxylated E1 and E2 at the C15alpha and C16alpha positions. Displays different regioselectivities for polyunsaturated fatty acids (PUFA) hydroxylation. Catalyzes the epoxidation of double bonds of certain PUFA. Converts arachidonic acid toward epoxyeicosatrienoic acid (EET) regioisomers, 8,9-, 11,12-, and 14,15-EET, that function as lipid mediators in the vascular system. Displays an absolute stereoselectivity in the epoxidation of eicosapentaenoic acid (EPA) producing the 17(R),18(S) enantiomer. May play an important role in all-trans retinoic acid biosynthesis in extrahepatic tissues. Catalyzes two successive oxidative transformation of all-trans retinol to all-trans retinal and then to the active form all-trans retinoic acid. May also participate in eicosanoids metabolism by converting hydroperoxide species into oxo metabolites (lipoxygenase-like reaction, NADPH-independent). The chain is Cytochrome P450 1A1 (CYP1A1) from Balaenoptera acutorostrata (Common minke whale).